Reading from the N-terminus, the 478-residue chain is Endoplasmic reticulum oxidoreductin-1 (478 aa).

A signal peptide spans 1–20 (MREPLLQLIVLSLIIIVVNT). 6 disulfide bridges follow: C28-C41, C30-C39, C79-C384, C88-C93, C209-C230, and C387-C390. Positions 117 to 143 (AAVKEEEDDDAEKCADAGNNIDPMDRT) are disordered. R188, T190, and W201 together coordinate FAD. Residues S241, H244, R283, and R295 each coordinate FAD. N377 carries an N-linked (GlcNAc...) asparagine glycan. The interval 459–478 (ESVMNTAADGPPRKSNKIDL) is disordered.

Belongs to the EROs family. As to quaternary structure, may function both as a monomer and a homodimer. The cofactor is FAD.

Its subcellular location is the endoplasmic reticulum membrane. Functionally, oxidoreductase involved in disulfide bond formation in the endoplasmic reticulum. Efficiently reoxidizes pdi-1, the enzyme catalyzing protein disulfide formation, in order to allow pdi-1 to sustain additional rounds of disulfide formation. Following pdi reoxidation, passes its electrons to molecular oxygen via FAD, leading to the production of reactive oxygen species (ROS) in the cell. This chain is Endoplasmic reticulum oxidoreductin-1 (ero-1), found in Caenorhabditis elegans.